A 225-amino-acid polypeptide reads, in one-letter code: Small ribosomal subunit protein uS3 (225 aa).

Positions 38–106 constitute a KH type-2 domain; that stretch reads LRKFLQGKLQ…EVSLNIVEIR (69 aa).

This sequence belongs to the universal ribosomal protein uS3 family. Part of the 30S ribosomal subunit. Forms a tight complex with proteins S10 and S14.

Its function is as follows. Binds the lower part of the 30S subunit head. Binds mRNA in the 70S ribosome, positioning it for translation. This chain is Small ribosomal subunit protein uS3, found in Rhodospirillum centenum (strain ATCC 51521 / SW).